A 287-amino-acid polypeptide reads, in one-letter code: Elongation factor Ts (287 aa).

Residues 77–80 (TDFV) form an involved in Mg(2+) ion dislocation from EF-Tu region.

The protein belongs to the EF-Ts family.

The protein resides in the cytoplasm. Associates with the EF-Tu.GDP complex and induces the exchange of GDP to GTP. It remains bound to the aminoacyl-tRNA.EF-Tu.GTP complex up to the GTP hydrolysis stage on the ribosome. The polypeptide is Elongation factor Ts (Wolbachia sp. subsp. Brugia malayi (strain TRS)).